A 204-amino-acid polypeptide reads, in one-letter code: MSAQDKLIKAQHLIDMNDIIREGNPTLRAVAKEVEFPLSDDDIILGEKMMQFLKHSQDPVMGEKLGLRAGVGLAAPQIDVSKRIIAVLVPNPEDSEGNPPKEAYSMEEVLYNPKIVSHSVQDAALADGEGCLSVDRVVEGYVVRHARVTVEYYDKHNEKHRIKLKGYNAIVVQHEIDHINGVLFYDRINAKNPFEAKEGMLILE.

Fe cation is bound by residues Cys131 and His174. Glu175 is a catalytic residue. His178 lines the Fe cation pocket.

The protein belongs to the polypeptide deformylase family. Fe(2+) is required as a cofactor.

It carries out the reaction N-terminal N-formyl-L-methionyl-[peptide] + H2O = N-terminal L-methionyl-[peptide] + formate. Its function is as follows. Removes the formyl group from the N-terminal Met of newly synthesized proteins. Requires at least a dipeptide for an efficient rate of reaction. N-terminal L-methionine is a prerequisite for activity but the enzyme has broad specificity at other positions. This chain is Peptide deformylase, found in Streptococcus equi subsp. zooepidemicus (strain MGCS10565).